Here is a 143-residue protein sequence, read N- to C-terminus: Large ribosomal subunit protein uL11 (143 aa).

This sequence belongs to the universal ribosomal protein uL11 family. As to quaternary structure, part of the ribosomal stalk of the 50S ribosomal subunit. Interacts with L10 and the large rRNA to form the base of the stalk. L10 forms an elongated spine to which L12 dimers bind in a sequential fashion forming a multimeric L10(L12)X complex. Post-translationally, one or more lysine residues are methylated.

In terms of biological role, forms part of the ribosomal stalk which helps the ribosome interact with GTP-bound translation factors. The sequence is that of Large ribosomal subunit protein uL11 from Cupriavidus pinatubonensis (strain JMP 134 / LMG 1197) (Cupriavidus necator (strain JMP 134)).